Consider the following 231-residue polypeptide: L-ribulose-5-phosphate 4-epimerase SgbE (231 aa).

Residues 27-28 (GN), 44-45 (SG), and 74-75 (SS) contribute to the substrate site. 3 residues coordinate Zn(2+): D76, H95, and H97. Residue D120 is the Proton donor/acceptor of the active site. H171 contacts Zn(2+). Residue Y229 is the Proton donor/acceptor of the active site.

It belongs to the aldolase class II family. AraD/FucA subfamily. Zn(2+) is required as a cofactor.

The catalysed reaction is L-ribulose 5-phosphate = D-xylulose 5-phosphate. In terms of biological role, catalyzes the interconversion of L-ribulose 5-phosphate (LRu5P) and D-xylulose 5-phosphate (D-Xu5P) via a retroaldol/aldol mechanism (carbon-carbon bond cleavage analogous to a class II aldolase reaction). May be involved in the utilization of 2,3-diketo-L-gulonate. The chain is L-ribulose-5-phosphate 4-epimerase SgbE from Haemophilus influenzae (strain ATCC 51907 / DSM 11121 / KW20 / Rd).